Here is a 252-residue protein sequence, read N- to C-terminus: Nicotinamide/nicotinic acid mononucleotide adenylyltransferase 3 (252 aa).

Residues Ser-14 and Phe-15 each contribute to the NAD(+) site. ATP contacts are provided by His-22 and Lys-56. Residues Trp-90, Thr-93, Gly-135, and Asp-137 each contribute to the NAD(+) site. Lys-140 serves as a coordination point for ATP. Leu-147, Trp-148, Arg-167, and Asn-198 together coordinate NAD(+). Residue 203–206 (TYIR) coordinates ATP.

Belongs to the eukaryotic NMN adenylyltransferase family. Homotetramer. Requires Mg(2+) as cofactor. In terms of tissue distribution, expressed in lung and spleen with lower levels in placenta and kidney.

It is found in the mitochondrion. It carries out the reaction beta-nicotinamide D-ribonucleotide + ATP + H(+) = diphosphate + NAD(+). The catalysed reaction is nicotinate beta-D-ribonucleotide + ATP + H(+) = deamido-NAD(+) + diphosphate. The protein operates within cofactor biosynthesis; NAD(+) biosynthesis; NAD(+) from nicotinamide D-ribonucleotide: step 1/1. It participates in cofactor biosynthesis; NAD(+) biosynthesis; deamido-NAD(+) from nicotinate D-ribonucleotide: step 1/1. Activity is strongly inhibited by galotannin. Inhibited by P1-(adenosine-5')-P4-(nicotinic-acid-riboside-5')-tetraphosphate (Nap4AD). Catalyzes the formation of NAD(+) from nicotinamide mononucleotide (NMN) and ATP. Can also use the deamidated form; nicotinic acid mononucleotide (NaMN) as substrate with the same efficiency. Can use triazofurin monophosphate (TrMP) as substrate. Can also use GTP and ITP as nucleotide donors. Also catalyzes the reverse reaction, i.e. the pyrophosphorolytic cleavage of NAD(+). For the pyrophosphorolytic activity, can use NAD(+), NADH, NaAD, nicotinic acid adenine dinucleotide phosphate (NHD), nicotinamide guanine dinucleotide (NGD) as substrates. Fails to cleave phosphorylated dinucleotides NADP(+), NADPH and NaADP(+). Protects against axonal degeneration following injury. May be involved in the maintenance of axonal integrity. Also functions as a stress-response chaperone protein that prevents toxic aggregation of proteins; this function may be independent of its NAD(+) synthesis activity. The protein is Nicotinamide/nicotinic acid mononucleotide adenylyltransferase 3 of Homo sapiens (Human).